Reading from the N-terminus, the 1020-residue chain is Glucan endo-1,3-beta-D-glucosidase (1020 aa).

The first 25 residues, 1–25 (MKGKNVQLLFALVVIILLFPTGASA), serve as a signal peptide directing secretion. The interval 28 to 251 (HAVSVGKGSY…ADYIAIAKLP (224 aa)) is beta-sandwich subdomain. Residues 28–722 (HAVSVGKGSY…HWIHNLAELG (695 aa)) form the GH81 domain. An alpha/beta subdomain region spans residues 252–350 (EKDGNMLAKF…EGKRFTTELT (99 aa)). The (alpha/beta)6 barrel subdomain stretch occupies residues 360-722 (DLGDYDRERL…HWIHNLAELG (363 aa)). (1,3-beta-D-glucosyl)n is bound by residues Tyr387, Lys391, His458, Asp466, His470, Asp530, Asn540, Glu542, Glu546, Glu699, and Arg704. Residue Asp466 is part of the active site. Residues Glu542 and Glu546 contribute to the active site. The tract at residues 771-790 (HSFNIGNGDGPTNPDPSEPD) is disordered. Residues 796 to 922 (ERIQAEAYDA…LMNVNWFVFR (127 aa)) form the CBM6 domain. (1,3-beta-D-glucosyl)n contacts are provided by Glu812, Trp825, Asp853, Asn878, Asp912, and Asn915. In terms of domain architecture, CBM56 spans 928-1020 (NGDSHTHPDY…YTTEWFTYSR (93 aa)).

Belongs to the glycosyl hydrolase 81 family.

It localises to the secreted. It catalyses the reaction Hydrolysis of (1-&gt;3)-beta-D-glucosidic linkages in (1-&gt;3)-beta-D-glucans.. In terms of biological role, cleaves internal linkages in 1,3-beta-glucan. May contribute to plant biomass degradation. This Halalkalibacterium halodurans (strain ATCC BAA-125 / DSM 18197 / FERM 7344 / JCM 9153 / C-125) (Bacillus halodurans) protein is Glucan endo-1,3-beta-D-glucosidase.